The primary structure comprises 107 residues: MMKGGLAGLMKQAQAMQENMKKAQEQLAQVEVEGVAGAGMVKVLMTCAHEVRRVNIDPSVMDDREMLEDLIAAALNDAVRRGEALSKDKMSGFTSGLNLPPGFKLPF.

The protein belongs to the YbaB/EbfC family. Homodimer.

Its subcellular location is the cytoplasm. The protein localises to the nucleoid. Functionally, binds to DNA and alters its conformation. May be involved in regulation of gene expression, nucleoid organization and DNA protection. This Dechloromonas aromatica (strain RCB) protein is Nucleoid-associated protein Daro_0807.